Consider the following 304-residue polypeptide: Serine/threonine-protein phosphatase PP1 isozyme 3 (304 aa).

Mn(2+) contacts are provided by Asp61, His63, Asp89, and Asn121. Residue His122 is the Proton donor of the active site. Mn(2+)-binding residues include His170 and His245.

It belongs to the PPP phosphatase family. PP-1 subfamily. Requires Mn(2+) as cofactor.

The enzyme catalyses O-phospho-L-seryl-[protein] + H2O = L-seryl-[protein] + phosphate. It catalyses the reaction O-phospho-L-threonyl-[protein] + H2O = L-threonyl-[protein] + phosphate. The polypeptide is Serine/threonine-protein phosphatase PP1 isozyme 3 (NPP3) (Nicotiana tabacum (Common tobacco)).